A 159-amino-acid chain; its full sequence is Probable carbonic anhydrase (159 aa).

Residues 33-35 and 48-49 each bind substrate; these read RGD and QD. 3 residues coordinate Zn(2+): H54, H71, and H76.

Belongs to the gamma-class carbonic anhydrase family. Zn(2+) serves as cofactor.

The catalysed reaction is hydrogencarbonate + H(+) = CO2 + H2O. Probably reversibly hydrates carbon dioxide. The protein is Probable carbonic anhydrase of Methanocaldococcus jannaschii (strain ATCC 43067 / DSM 2661 / JAL-1 / JCM 10045 / NBRC 100440) (Methanococcus jannaschii).